Here is a 197-residue protein sequence, read N- to C-terminus: GTP cyclohydrolase-2 (197 aa).

Residue Arg50 to Glu54 coordinates GTP. Positions 55, 66, and 68 each coordinate Zn(2+). Residues Gln71, Glu93–Arg95, and Thr115 each bind GTP. Asp127 (proton acceptor) is an active-site residue. Arg129 functions as the Nucleophile in the catalytic mechanism. Residues Thr150 and Lys155 each contribute to the GTP site.

It belongs to the GTP cyclohydrolase II family. It depends on Zn(2+) as a cofactor.

It catalyses the reaction GTP + 4 H2O = 2,5-diamino-6-hydroxy-4-(5-phosphoribosylamino)-pyrimidine + formate + 2 phosphate + 3 H(+). The protein operates within cofactor biosynthesis; riboflavin biosynthesis; 5-amino-6-(D-ribitylamino)uracil from GTP: step 1/4. Catalyzes the conversion of GTP to 2,5-diamino-6-ribosylamino-4(3H)-pyrimidinone 5'-phosphate (DARP), formate and pyrophosphate. In Aeromonas hydrophila subsp. hydrophila (strain ATCC 7966 / DSM 30187 / BCRC 13018 / CCUG 14551 / JCM 1027 / KCTC 2358 / NCIMB 9240 / NCTC 8049), this protein is GTP cyclohydrolase-2.